The sequence spans 158 residues: 6,7-dimethyl-8-ribityllumazine synthase (158 aa).

5-amino-6-(D-ribitylamino)uracil-binding positions include Phe22, 57-59 (AVE), and 81-83 (AVI). A (2S)-2-hydroxy-3-oxobutyl phosphate-binding site is contributed by 86-87 (GT). Residue His89 is the Proton donor of the active site. Phe114 contacts 5-amino-6-(D-ribitylamino)uracil. Position 128 (Arg128) interacts with (2S)-2-hydroxy-3-oxobutyl phosphate.

The protein belongs to the DMRL synthase family. In terms of assembly, forms an icosahedral capsid composed of 60 subunits, arranged as a dodecamer of pentamers.

It carries out the reaction (2S)-2-hydroxy-3-oxobutyl phosphate + 5-amino-6-(D-ribitylamino)uracil = 6,7-dimethyl-8-(1-D-ribityl)lumazine + phosphate + 2 H2O + H(+). It functions in the pathway cofactor biosynthesis; riboflavin biosynthesis; riboflavin from 2-hydroxy-3-oxobutyl phosphate and 5-amino-6-(D-ribitylamino)uracil: step 1/2. Functionally, catalyzes the formation of 6,7-dimethyl-8-ribityllumazine by condensation of 5-amino-6-(D-ribitylamino)uracil with 3,4-dihydroxy-2-butanone 4-phosphate. This is the penultimate step in the biosynthesis of riboflavin. This is 6,7-dimethyl-8-ribityllumazine synthase from Shewanella oneidensis (strain ATCC 700550 / JCM 31522 / CIP 106686 / LMG 19005 / NCIMB 14063 / MR-1).